The sequence spans 453 residues: O-glucose prenyltransferase PaPT (453 aa).

L-tryptophan is bound at residue 95-96; sequence AP. Residues Lys-210, Tyr-212, Arg-279, Lys-281, Tyr-283, Tyr-368, and Tyr-435 each contribute to the substrate site.

This sequence belongs to the tryptophan dimethylallyltransferase family.

Its pathway is mycotoxin biosynthesis. Functionally, O-glucose prenyltransferase; part of the 2 gene clusters that mediate the biosynthesis of fusicoccins, diterpene glucosides that display phytohormone-like activity and function as potent activators of plasma membrane H(+)-ATPases in plants by modifying 14-3-3 proteins and cause the plant disease constriction canker. The first step in the pathway is performed by the fusicoccadiene synthase PaFS that possesses both prenyl transferase and terpene cyclase activity, converting isopentenyl diphosphate and dimethylallyl diphosphate into geranylgeranyl diphosphate (GGDP) and successively converting GGDP into fusicocca-2,10(14)-diene, a precursor for fusicoccin H. The second step is the oxidation at the C-8 position by the cytochrome P450 monooxygenase PaP450-2 to yield fusicocca-2,10(14)-diene-8-beta-ol. The cytochrome P450 monooxygenase PaP450-1 then catalyzes the hydroxylation at the C-16 position to produce fusicocca-2,10(14)-diene-8-beta,16-diol. The dioxygenase fc-dox then catalyzes the 16-oxydation of fusicocca-2,10(14)-diene-8-beta,16-diol to yield an aldehyde (8-beta-hydroxyfusicocca-1,10(14)-dien-16-al). The short-chain dehydrogenase/reductase fc-sdr catalyzes the reduction of the aldehyde to yield fusicocca-1,10(14)-diene-8-beta,16-diol. The next step is the hydroxylation at C-9 performed by the cytochrome P450 monooxygenase PaP450-3 that leads to fusicoccin H aglycon which is glycosylated to fusicoccin H by the O-glycosyltransferase PaGT. Hydroxylation at C-12 by the cytochrome P450 monooxygenase PaP450-4 leads then to the production of fusicoccin Q and is followed by methylation by the O-methyltransferase PaMT to yield fusicoccin P. Fusicoccin P is further converted to fusicoccin J via prenylation by the O-glucose prenyltransferase PaPT. Cytochrome P450 monooxygenase PaP450-5 then performs hydroxylation at C-19 to yield dideacetyl-fusicoccin A which is acetylated to 3'-O-deacetyl-fusicoccin A by the O-acetyltransferase PaAT-2. Finally, a another acetylation by the O-acetyltransferase PaAT-1 yields fusicoccin A. This Phomopsis amygdali (Fusicoccum amygdali) protein is O-glucose prenyltransferase PaPT.